We begin with the raw amino-acid sequence, 165 residues long: Large ribosomal subunit protein uL10 (165 aa).

This sequence belongs to the universal ribosomal protein uL10 family. As to quaternary structure, part of the ribosomal stalk of the 50S ribosomal subunit. The N-terminus interacts with L11 and the large rRNA to form the base of the stalk. The C-terminus forms an elongated spine to which L12 dimers bind in a sequential fashion forming a multimeric L10(L12)X complex.

In terms of biological role, forms part of the ribosomal stalk, playing a central role in the interaction of the ribosome with GTP-bound translation factors. The protein is Large ribosomal subunit protein uL10 of Burkholderia lata (strain ATCC 17760 / DSM 23089 / LMG 22485 / NCIMB 9086 / R18194 / 383).